Here is a 663-residue protein sequence, read N- to C-terminus: General transcription and DNA repair factor IIH subunit tcf-29 (663 aa).

BSD domains are found at residues 147–206 and 227–278; these read WFED…RAYA and ENGE…LSKK. Disordered regions lie at residues 452–491 and 513–535; these read DSDGRGGIDLHRSIGVDPDSDDEGNNSLDSKSGPKPQHVG and HLTTTTTHGGSHTTTTNASEERP. Positions 453–465 are enriched in basic and acidic residues; that stretch reads SDGRGGIDLHRSI. The span at 515 to 528 shows a compositional bias: low complexity; sequence TTTTTHGGSHTTTT.

This sequence belongs to the TFB1 family. In terms of assembly, component of the 7-subunit TFIIH core complex composed of XPB/rad25, XPD/dnr-10, tcf-30/SSL1, tcf-29/TFB1, tcf-11/TFB2, tcf-14/TFB4 and rtf-1/TFB5, which is active in NER. The core complex associates with the 3-subunit CTD-kinase module TFIIK composed of div-66/cyclin H, prk-3/KIN28 and rtf-2/TFB3 to form the 10-subunit holoenzyme (holo-TFIIH) active in transcription.

It localises to the nucleus. In terms of biological role, component of the general transcription and DNA repair factor IIH (TFIIH) core complex, which is involved in general and transcription-coupled nucleotide excision repair (NER) of damaged DNA and, when complexed to TFIIK, in RNA transcription by RNA polymerase II. In NER, TFIIH acts by opening DNA around the lesion to allow the excision of the damaged oligonucleotide and its replacement by a new DNA fragment. In transcription, TFIIH has an essential role in transcription initiation. When the pre-initiation complex (PIC) has been established, TFIIH is required for promoter opening and promoter escape. Phosphorylation of the C-terminal tail (CTD) of the largest subunit of RNA polymerase II by the kinase module TFIIK controls the initiation of transcription. The polypeptide is General transcription and DNA repair factor IIH subunit tcf-29 (tcf-29) (Neurospora crassa (strain ATCC 24698 / 74-OR23-1A / CBS 708.71 / DSM 1257 / FGSC 987)).